Here is a 187-residue protein sequence, read N- to C-terminus: Accessory gene regulator protein B (187 aa).

The next 5 helical transmembrane spans lie at 49–69 (IAYI…FYLI), 82–102 (FWCY…VLHF), 107–127 (TLMM…APAA), 143–163 (YFSI…KEPY), and 164–184 (TQFI…IYYS).

This sequence belongs to the AgrB family.

The protein localises to the cell membrane. Its function is as follows. Essential for the production of a quorum sensing system signal molecule, the autoinducing peptide (AIP). This quorum sensing system is responsible for the regulation of the expression of virulence factor genes. Involved in the proteolytic processing of AgrD, the precursor of AIP. In Staphylococcus aureus (strain MW2), this protein is Accessory gene regulator protein B.